We begin with the raw amino-acid sequence, 440 residues long: D-serine dehydratase (440 aa).

Residue lysine 116 is modified to N6-(pyridoxal phosphate)lysine.

The protein belongs to the serine/threonine dehydratase family. DsdA subfamily. As to quaternary structure, monomer. Requires pyridoxal 5'-phosphate as cofactor.

The enzyme catalyses D-serine = pyruvate + NH4(+). The sequence is that of D-serine dehydratase from Salmonella typhimurium (strain LT2 / SGSC1412 / ATCC 700720).